The primary structure comprises 547 residues: DNA ligase (547 aa).

Glutamate 244 contributes to the ATP binding site. Lysine 246 functions as the N6-AMP-lysine intermediate in the catalytic mechanism. The ATP site is built by arginine 251, arginine 266, glutamate 295, phenylalanine 334, arginine 405, and lysine 411.

This sequence belongs to the ATP-dependent DNA ligase family. It depends on Mg(2+) as a cofactor.

The catalysed reaction is ATP + (deoxyribonucleotide)n-3'-hydroxyl + 5'-phospho-(deoxyribonucleotide)m = (deoxyribonucleotide)n+m + AMP + diphosphate.. DNA ligase that seals nicks in double-stranded DNA during DNA replication, DNA recombination and DNA repair. This is DNA ligase from Methanospirillum hungatei JF-1 (strain ATCC 27890 / DSM 864 / NBRC 100397 / JF-1).